The chain runs to 1071 residues: DNA-directed RNA polymerase subunit beta (1071 aa).

It belongs to the RNA polymerase beta chain family. In terms of assembly, in plastids the minimal PEP RNA polymerase catalytic core is composed of four subunits: alpha, beta, beta', and beta''. When a (nuclear-encoded) sigma factor is associated with the core the holoenzyme is formed, which can initiate transcription.

Its subcellular location is the plastid. It is found in the chloroplast. The enzyme catalyses RNA(n) + a ribonucleoside 5'-triphosphate = RNA(n+1) + diphosphate. In terms of biological role, DNA-dependent RNA polymerase catalyzes the transcription of DNA into RNA using the four ribonucleoside triphosphates as substrates. The protein is DNA-directed RNA polymerase subunit beta of Nymphaea alba (White water-lily).